The primary structure comprises 148 residues: Small ribosomal subunit protein eS19 (148 aa).

The span at 79 to 90 (HGSTKNRGSRPA) shows a compositional bias: basic residues. 2 disordered regions span residues 79–98 (HGST…ASGA) and 116–148 (DEEK…EDDE). Positions 130-140 (RDLDRIAKTTV) are enriched in basic and acidic residues.

The protein belongs to the eukaryotic ribosomal protein eS19 family.

This Emericella nidulans (strain FGSC A4 / ATCC 38163 / CBS 112.46 / NRRL 194 / M139) (Aspergillus nidulans) protein is Small ribosomal subunit protein eS19 (rps19).